Reading from the N-terminus, the 216-residue chain is Protein-L-isoaspartate O-methyltransferase (216 aa).

Residue Ser-61 is part of the active site.

This sequence belongs to the methyltransferase superfamily. L-isoaspartyl/D-aspartyl protein methyltransferase family.

It is found in the cytoplasm. It carries out the reaction [protein]-L-isoaspartate + S-adenosyl-L-methionine = [protein]-L-isoaspartate alpha-methyl ester + S-adenosyl-L-homocysteine. Functionally, catalyzes the methyl esterification of L-isoaspartyl residues in peptides and proteins that result from spontaneous decomposition of normal L-aspartyl and L-asparaginyl residues. It plays a role in the repair and/or degradation of damaged proteins. The polypeptide is Protein-L-isoaspartate O-methyltransferase (pcm) (Pyrococcus abyssi (strain GE5 / Orsay)).